The primary structure comprises 119 residues: Protein TusC (119 aa).

The protein belongs to the DsrF/TusC family. As to quaternary structure, heterohexamer, formed by a dimer of trimers. The hexameric TusBCD complex contains 2 copies each of TusB, TusC and TusD. The TusBCD complex interacts with TusE.

It localises to the cytoplasm. Functionally, part of a sulfur-relay system required for 2-thiolation of 5-methylaminomethyl-2-thiouridine (mnm(5)s(2)U) at tRNA wobble positions. The polypeptide is Protein TusC (Shigella flexneri serotype 5b (strain 8401)).